The primary structure comprises 1342 residues: DNA-directed RNA polymerase subunit beta (1342 aa).

Residues K1022 and K1200 each carry the N6-acetyllysine modification.

Belongs to the RNA polymerase beta chain family. As to quaternary structure, the RNAP catalytic core consists of 2 alpha, 1 beta, 1 beta' and 1 omega subunit. When a sigma factor is associated with the core the holoenzyme is formed, which can initiate transcription.

It carries out the reaction RNA(n) + a ribonucleoside 5'-triphosphate = RNA(n+1) + diphosphate. In terms of biological role, DNA-dependent RNA polymerase catalyzes the transcription of DNA into RNA using the four ribonucleoside triphosphates as substrates. The chain is DNA-directed RNA polymerase subunit beta from Shigella flexneri serotype 5b (strain 8401).